Consider the following 3799-residue polypeptide: Polyketide synthase GfsE (3799 aa).

A Ketosynthase family 3 (KS3) 1 domain is found at 33–459; that stretch reads HEPIAIIGMS…GTNAHAILEE (427 aa). 2 module regions span residues 33–1730 and 1749–3494; these read HEPI…RSSA and DEAI…RTDL. Catalysis depends on for beta-ketoacyl synthase 1 activity residues Cys-206, His-341, and His-381. The interval 462–496 is disordered; sequence AATGNPTEADTDQEPAASASPDRTTTLPAVPWPLS. Positions 582-895 constitute a Malonyl-CoA:ACP transacylase (MAT) 1 domain; it reads FVFPGQGSQW…LGEAHAHGAD (314 aa). Residues 944-1069 are N-terminal hotdog fold 1; it reads HPLFGAVVEV…GVLELEARPE (126 aa). Residues 944-1222 enclose the PKS/mFAS DH 1 domain; it reads HPLFGAVVEV…SRPVAEEQLG (279 aa). Catalysis depends on His-976, which acts as the Proton acceptor; for dehydratase activity 1. Residues 1081–1222 are C-terminal hotdog fold 1; sequence AEVVPVEGLY…SRPVAEEQLG (142 aa). Residue Asp-1142 is the Proton donor; for dehydratase activity 1 of the active site. The region spanning 1382 to 1554 is the Ketoreductase (KR) 1 domain; that stretch reads LLVTGASGVL…TSLSWGLWAE (173 aa). Residues 1652–1730 enclose the Carrier 1 domain; it reads EAERAVLELV…ALATHIRSSA (79 aa). O-(pantetheine 4'-phosphoryl)serine is present on Ser-1690. Positions 1749-2174 constitute a Ketosynthase family 3 (KS3) 2 domain; that stretch reads DEAIAIVGMA…GTNAHVILEQ (426 aa). Active-site for beta-ketoacyl synthase 2 activity residues include Cys-1921, His-2056, and His-2096. A Malonyl-CoA:ACP transacylase (MAT) 2 domain is found at 2284-2604; sequence FVFPGQGSQW…VSLAKVHTHG (321 aa). The interval 2656–2781 is N-terminal hotdog fold 2; the sequence is HPLLTGVVDL…GTLAVDADHD (126 aa). The region spanning 2656–2936 is the PKS/mFAS DH 2 domain; sequence HPLLTGVVDL…TRPVTAAQFA (281 aa). The Proton acceptor; for dehydratase activity 2 role is filled by His-2688. The segment at 2794–2936 is C-terminal hotdog fold 2; the sequence is ADPVDLTEVY…TRPVTAAQFA (143 aa). The Proton donor; for dehydratase activity 2 role is filled by Asp-2855. The Ketoreductase (KR) 2 domain maps to 3142 to 3314; the sequence is LLVTGASGVL…TALSWGLWAE (173 aa). Residues 3419-3494 form the Carrier 2 domain; the sequence is AALLDLVGAQ…ALAAQLRTDL (76 aa). An O-(pantetheine 4'-phosphoryl)serine modification is found at Ser-3454.

It depends on pantetheine 4'-phosphate as a cofactor.

The protein operates within antibiotic biosynthesis. Its function is as follows. Fifth protein in the synthesis of the 16-membered macrolide antibiotics FD-891 and FD-892. Composed of 2 modules. Modifies the product of GfsD by multiple rounds of addition of methylmalonyl-CoA and other modifications to help generate the final products. In Streptomyces halstedii, this protein is Polyketide synthase GfsE.